A 205-amino-acid polypeptide reads, in one-letter code: Holliday junction branch migration complex subunit RuvA (205 aa).

Residues 1-64 are domain I; sequence MIGRLRGVLV…EDAQLLYGFI (64 aa). The tract at residues 65-143 is domain II; it reads TKQERALFRL…SLMEASAGSE (79 aa). Residues 144–156 are flexible linker; it reads REFVLQSNYSPTP. Positions 157–205 are domain III; sequence TVNSAEEDAISALISLGYKPPQASKSVSAAYKEGMDSETLIKAALKSML.

The protein belongs to the RuvA family. As to quaternary structure, homotetramer. Forms an RuvA(8)-RuvB(12)-Holliday junction (HJ) complex. HJ DNA is sandwiched between 2 RuvA tetramers; dsDNA enters through RuvA and exits via RuvB. An RuvB hexamer assembles on each DNA strand where it exits the tetramer. Each RuvB hexamer is contacted by two RuvA subunits (via domain III) on 2 adjacent RuvB subunits; this complex drives branch migration. In the full resolvosome a probable DNA-RuvA(4)-RuvB(12)-RuvC(2) complex forms which resolves the HJ.

The protein resides in the cytoplasm. In terms of biological role, the RuvA-RuvB-RuvC complex processes Holliday junction (HJ) DNA during genetic recombination and DNA repair, while the RuvA-RuvB complex plays an important role in the rescue of blocked DNA replication forks via replication fork reversal (RFR). RuvA specifically binds to HJ cruciform DNA, conferring on it an open structure. The RuvB hexamer acts as an ATP-dependent pump, pulling dsDNA into and through the RuvAB complex. HJ branch migration allows RuvC to scan DNA until it finds its consensus sequence, where it cleaves and resolves the cruciform DNA. The sequence is that of Holliday junction branch migration complex subunit RuvA from Shewanella sp. (strain W3-18-1).